Here is a 479-residue protein sequence, read N- to C-terminus: MVPSQRLSRTSSISSNEDPAESHILELEAVSDTNTDCDMDPMEGSEEHSTDGEISSSEEEDEDPTPAHAVPAQPSSVVITPTSASFVIPRKKWDLQDKTVTLHRSPLCRDEDEKEETGNSSYTRGHKRRRGEVHGCTDESYGKRRHLPPGARAPRAPRAPRVPRAPRSPRAPRSNRATRGPRSESRGAGRSTRKQARQERSQRPLPNKPWFDMSLVKPVSKITFVTLPSPLASLTLEPIQDPFLQSMLAVAAHPEIGAWQKVQPRHELRRSYKTLREFFTKSTNKDTWLDARMQAIQNAGLCTLVAMLEETIFWLQEITYHGDLPLAPAEDILLACAMSLSKVILTKLKELAPCFLPNTRDYNFVKQLFYITCATARQNKVVETLSSSYVKQPLCLLAAYAAVAPAYINANCRRRHDEVEFLGHYIKNYNPGTLSSLLTEAVETHTRDCRSASCSRLVRAILSPATGSLGLFFVPGLNQ.

Residues 1 to 15 (MVPSQRLSRTSSISS) show a composition bias toward low complexity. Disordered stretches follow at residues 1 to 78 (MVPS…SSVV) and 92 to 210 (KWDL…NKPW). A compositionally biased stretch (acidic residues) spans 35-44 (TDCDMDPMEG). Residues 132-142 (EVHGCTDESYG) show a composition bias toward basic and acidic residues. Zn(2+) contacts are provided by cysteine 354, histidine 445, cysteine 449, and cysteine 454. The CHC2-type zinc finger occupies 354-454 (CFLPNTRDYN…HTRDCRSASC (101 aa)).

It belongs to the HHV-1 ICP27 protein family. Interacts with host XPO1 and with the XPO1 export pathway components small GTPase RAN and nucleoporin NUP214. Interacts with host SPEN, OTT1 and OTT3. Interacts with host SRSF1, SRSF3, SRSF7 and SRPK1. Interacts with host DHX9; this interaction may have an inhibitory effect on virion production. Interacts (via N-terminus) with host NXF1; this interaction plays a role in mRNA export. Post-translationally, phosphorylated by cellular protein kinase CK2.

It localises to the host nucleus. Its subcellular location is the host cytoplasm. Promotes the nuclear export of a subset of early and late viral mRNAs by interacting with mRNAs and cellular export proteins. Additionally may prevent the establishment of cellular antiviral state, by acting as an alternative splicing factor for cellular RNAs such as STAT1, resulting in a STAT1 mRNA incapable of producing the STAT1alpha isoform. The sequence is that of mRNA export factor ICP27 homolog from Homo sapiens (Human).